Consider the following 426-residue polypeptide: Histidine--tRNA ligase (426 aa).

It belongs to the class-II aminoacyl-tRNA synthetase family.

It is found in the cytoplasm. The catalysed reaction is tRNA(His) + L-histidine + ATP = L-histidyl-tRNA(His) + AMP + diphosphate + H(+). The sequence is that of Histidine--tRNA ligase from Saccharolobus islandicus (strain L.S.2.15 / Lassen #1) (Sulfolobus islandicus).